A 227-amino-acid polypeptide reads, in one-letter code: NAD(P)H-hydrate epimerase (227 aa).

Residues 12–221 (SRLVDELAIA…DIGVPRALLE (210 aa)) enclose the YjeF N-terminal domain. Residue 59 to 63 (NNGGD) coordinates (6S)-NADPHX. Residues Asn60 and Asp131 each contribute to the K(+) site. (6S)-NADPHX is bound by residues 135 to 141 (GTGATGE) and Asp164. Thr167 is a K(+) binding site.

This sequence belongs to the NnrE/AIBP family. Requires K(+) as cofactor.

The catalysed reaction is (6R)-NADHX = (6S)-NADHX. It carries out the reaction (6R)-NADPHX = (6S)-NADPHX. Catalyzes the epimerization of the S- and R-forms of NAD(P)HX, a damaged form of NAD(P)H that is a result of enzymatic or heat-dependent hydration. This is a prerequisite for the S-specific NAD(P)H-hydrate dehydratase to allow the repair of both epimers of NAD(P)HX. This chain is NAD(P)H-hydrate epimerase, found in Pirellula staleyi (strain ATCC 27377 / DSM 6068 / ICPB 4128) (Pirella staleyi).